Reading from the N-terminus, the 345-residue chain is N-acetyl-gamma-glutamyl-phosphate reductase (345 aa).

Residue cysteine 149 is part of the active site.

The protein belongs to the NAGSA dehydrogenase family. Type 1 subfamily.

It is found in the cytoplasm. It catalyses the reaction N-acetyl-L-glutamate 5-semialdehyde + phosphate + NADP(+) = N-acetyl-L-glutamyl 5-phosphate + NADPH + H(+). Its pathway is amino-acid biosynthesis; L-arginine biosynthesis; N(2)-acetyl-L-ornithine from L-glutamate: step 3/4. In terms of biological role, catalyzes the NADPH-dependent reduction of N-acetyl-5-glutamyl phosphate to yield N-acetyl-L-glutamate 5-semialdehyde. The sequence is that of N-acetyl-gamma-glutamyl-phosphate reductase from Bacillus thuringiensis subsp. konkukian (strain 97-27).